The sequence spans 319 residues: tRNA-cytidine(32) 2-sulfurtransferase (319 aa).

Positions 49–54 (SGGKDS) match the PP-loop motif motif. The [4Fe-4S] cluster site is built by Cys124, Cys127, and Cys215.

It belongs to the TtcA family. Homodimer. Mg(2+) is required as a cofactor. It depends on [4Fe-4S] cluster as a cofactor.

Its subcellular location is the cytoplasm. The catalysed reaction is cytidine(32) in tRNA + S-sulfanyl-L-cysteinyl-[cysteine desulfurase] + AH2 + ATP = 2-thiocytidine(32) in tRNA + L-cysteinyl-[cysteine desulfurase] + A + AMP + diphosphate + H(+). Its pathway is tRNA modification. Its function is as follows. Catalyzes the ATP-dependent 2-thiolation of cytidine in position 32 of tRNA, to form 2-thiocytidine (s(2)C32). The sulfur atoms are provided by the cysteine/cysteine desulfurase (IscS) system. The protein is tRNA-cytidine(32) 2-sulfurtransferase of Shewanella amazonensis (strain ATCC BAA-1098 / SB2B).